Consider the following 161-residue polypeptide: FAD synthase (161 aa).

Residues 19–20 (TF), 24–27 (HPGH), Asp-106, and Tyr-133 contribute to the ATP site.

Belongs to the archaeal FAD synthase family. Homodimer. It depends on a divalent metal cation as a cofactor.

The enzyme catalyses FMN + ATP + H(+) = FAD + diphosphate. It participates in cofactor biosynthesis; FAD biosynthesis; FAD from FMN: step 1/1. Catalyzes the transfer of the AMP portion of ATP to flavin mononucleotide (FMN) to produce flavin adenine dinucleotide (FAD) coenzyme. In Methanothermobacter marburgensis (strain ATCC BAA-927 / DSM 2133 / JCM 14651 / NBRC 100331 / OCM 82 / Marburg) (Methanobacterium thermoautotrophicum), this protein is FAD synthase.